Reading from the N-terminus, the 592-residue chain is MMRTHYCGSLTEAQIDQTVTLCGWVHRRRDHGGVIFLDMRDRDGLVQVVIDPDTPEAFATADKARSEYVLKITGRVRRRYEGTENPNMVSGQIEVLGKEIEVLAASETPPFPLNDDTINVSEEHRLKYRFLDIRRPEMLERLRFRSKVTNLIRNYLDDHGFLDVETPILTRATPEGARDYLVPSRVQNGSFYALPQSPQLFKQLLMVGGIDRYYQIAKCFRDEDLRADRQPEFTQIDIETSFLNDDDIMDLMEGMTVKLFNDLLGVKFEKFRRMPYSEAMRDYASDKPDLRIPLKLVDVADLMQEVEFKVFAGPAKDPKGRIAALRVPGAGSLTRSQIDEYTKFVGIYGAKGLAYIKVNEIEKGIEGLQSPIVKFIEPIVMQLLERVGAENGDIVFFGADKAKIVNDAMGALRVKIGHDLNLATCEWAPLWVVDFPMFEETDDGKWTSVHHPFTLPKSSVEDVKSNPGEALSVAYDMVLNGTEVGGGSLRIYTLEMQKAIFEALGISDEEAEEKFSFLLNALRYGAPPHGGLAFGLDRLVMLMTGATSIRDVIAFPKTKTAECPLTQAPAPVEANQLRDLGIRLREQQKKEA.

Position 175 (Glu175) interacts with L-aspartate. The interval 199–202 is aspartate; the sequence is QLFK. Arg221 serves as a coordination point for L-aspartate. Residues 221–223 and Gln230 contribute to the ATP site; that span reads RDE. His450 serves as a coordination point for L-aspartate. Glu483 contributes to the ATP binding site. Residue Arg490 participates in L-aspartate binding. 535–538 contributes to the ATP binding site; the sequence is GLDR.

It belongs to the class-II aminoacyl-tRNA synthetase family. Type 1 subfamily. In terms of assembly, homodimer.

The protein resides in the cytoplasm. It carries out the reaction tRNA(Asx) + L-aspartate + ATP = L-aspartyl-tRNA(Asx) + AMP + diphosphate. Its function is as follows. Aspartyl-tRNA synthetase with relaxed tRNA specificity since it is able to aspartylate not only its cognate tRNA(Asp) but also tRNA(Asn). Reaction proceeds in two steps: L-aspartate is first activated by ATP to form Asp-AMP and then transferred to the acceptor end of tRNA(Asp/Asn). In Acinetobacter baumannii (strain AB307-0294), this protein is Aspartate--tRNA(Asp/Asn) ligase.